A 220-amino-acid chain; its full sequence is PRA1 family protein B4 (220 aa).

A disordered region spans residues 1 to 27 (MASSAPPVLPISNPQTVPSAAPSSVES). Residues 12 to 27 (SNPQTVPSAAPSSVES) are compositionally biased toward polar residues. 5 helical membrane-spanning segments follow: residues 83–103 (YSYF…FSLV), 105–125 (HPFS…LYLF), 146–166 (GCLI…SVLV), 170–190 (MIGV…DLFL), and 196–216 (AATG…PAVI).

Belongs to the PRA1 family. Interacts with PRA1B1, PRA1B2, PRA1B3, PRA1B5, PRA1B6 and PRA1E. As to expression, expressed in roots, lateral roots, lateral root caps, stomata and trichomes.

It localises to the endosome membrane. Its function is as follows. May be involved in both secretory and endocytic intracellular trafficking in the endosomal/prevacuolar compartments. The sequence is that of PRA1 family protein B4 (PRA1B4) from Arabidopsis thaliana (Mouse-ear cress).